The sequence spans 207 residues: MIGYLQGSLAGVRKQSGRLLLLLDVQGVGYEVQTPARSLVELPAAGQSLQVFTHLQVREDQWLLFGFLQMAERDLFRQLISVSGIGPQLGLALLDSLSLAELVQAIVAGNTRLLSRTPGVGAKTAERLALELRSKLAEWREEAGLLPSATAAPIAAVQEDVEMTLLALGYNNREILQALTAIAQENLVQSGQPAEDWIREAIAWLSR.

Positions 1 to 68 (MIGYLQGSLA…EDQWLLFGFL (68 aa)) are domain I. Residues 69-147 (QMAERDLFRQ…EWREEAGLLP (79 aa)) are domain II. The tract at residues 148 to 158 (SATAAPIAAVQ) is flexible linker. The tract at residues 158-207 (QEDVEMTLLALGYNNREILQALTAIAQENLVQSGQPAEDWIREAIAWLSR) is domain III.

It belongs to the RuvA family. In terms of assembly, homotetramer. Forms an RuvA(8)-RuvB(12)-Holliday junction (HJ) complex. HJ DNA is sandwiched between 2 RuvA tetramers; dsDNA enters through RuvA and exits via RuvB. An RuvB hexamer assembles on each DNA strand where it exits the tetramer. Each RuvB hexamer is contacted by two RuvA subunits (via domain III) on 2 adjacent RuvB subunits; this complex drives branch migration. In the full resolvosome a probable DNA-RuvA(4)-RuvB(12)-RuvC(2) complex forms which resolves the HJ.

It is found in the cytoplasm. In terms of biological role, the RuvA-RuvB-RuvC complex processes Holliday junction (HJ) DNA during genetic recombination and DNA repair, while the RuvA-RuvB complex plays an important role in the rescue of blocked DNA replication forks via replication fork reversal (RFR). RuvA specifically binds to HJ cruciform DNA, conferring on it an open structure. The RuvB hexamer acts as an ATP-dependent pump, pulling dsDNA into and through the RuvAB complex. HJ branch migration allows RuvC to scan DNA until it finds its consensus sequence, where it cleaves and resolves the cruciform DNA. The protein is Holliday junction branch migration complex subunit RuvA of Synechococcus elongatus (strain ATCC 33912 / PCC 7942 / FACHB-805) (Anacystis nidulans R2).